We begin with the raw amino-acid sequence, 498 residues long: NAC domain-containing protein 75 (498 aa).

The NAC domain occupies 48 to 215; that stretch reads LPAGVKFDPT…ELVVSKIFYQ (168 aa). The DNA-binding element occupies 166-221; sequence KGCKKILVLYTNFGKNRKPEKTNWVMHQYHLGTHEEEKEGELVVSKIFYQTQPRQC. Disordered stretches follow at residues 225–278, 338–374, 423–443, and 457–498; these read SSTS…PNRS, VMAE…QRHH, QQQL…GGRS, and STTH…DHHG. Residues 233-248 are compositionally biased toward gly residues; sequence IGGGGGEASSGGGGGE. Over residues 256 to 266 the composition is skewed to low complexity; it reads GTTSGGSCSSS. Over residues 356–374 the composition is skewed to basic residues; that stretch reads HMAHDHHHHHHQQQQQRHH. Polar residues predominate over residues 466-475; the sequence is GSSSMGNQQE.

In terms of tissue distribution, expressed in the vascular cylinder of roots. Expressed in the differentiation zone of the root stele.

Its subcellular location is the nucleus. In terms of biological role, transcription activator involved in xylem formation. Promotes the expression of the secondary wall-associated transcription factor MYB46. Functions upstream of NAC030/VND7, a master switch of xylem vessel differentiation. Acts as a upstream regulator of NAC101/VND6 and LBD30/ASL19. This chain is NAC domain-containing protein 75, found in Arabidopsis thaliana (Mouse-ear cress).